The primary structure comprises 447 residues: Tyrosine aminotransferase (447 aa).

Lysine 273 is modified (N6-(pyridoxal phosphate)lysine). The residue at position 441 (serine 441) is a Phosphoserine.

The protein belongs to the class-I pyridoxal-phosphate-dependent aminotransferase family. In terms of assembly, homodimer. The cofactor is pyridoxal 5'-phosphate.

The enzyme catalyses L-tyrosine + 2-oxoglutarate = 3-(4-hydroxyphenyl)pyruvate + L-glutamate. It functions in the pathway amino-acid degradation; L-phenylalanine degradation; acetoacetate and fumarate from L-phenylalanine: step 2/6. Transaminase involved in tyrosine breakdown. Converts tyrosine to p-hydroxyphenylpyruvate. Can catalyze the reverse reaction, using glutamic acid, with 2-oxoglutarate as cosubstrate (in vitro). Has much lower affinity and transaminase activity for phenylalanine. The polypeptide is Tyrosine aminotransferase (TAT) (Bos taurus (Bovine)).